Reading from the N-terminus, the 175-residue chain is Disulfide bond formation protein B (175 aa).

Residues 1 to 13 (MVSNWLDAAPRRV) are Cytoplasmic-facing. Residues 14–30 (LALISAACIAMLAFGMY) traverse the membrane as a helical segment. At 31–48 (LQHVVGLEPCPMCIVQRY) the chain is on the periplasmic side. Cysteine 40 and cysteine 43 are disulfide-bonded. The helical transmembrane segment at 49-65 (ALIGVAVFTGLGSLRGG) threads the bilayer. Topologically, residues 66-70 (RGWWM) are cytoplasmic. Residues 71 to 88 (TWGVLALLLSGFGAFVAA) traverse the membrane as a helical segment. Topologically, residues 89–144 (RQSWLQWYPPEIATCGRDFYGMIENFPISRAIPMIFRGSGDCAAIDWTFLGGSIAN) are periplasmic. Cysteine 103 and cysteine 130 are joined by a disulfide. The chain crosses the membrane as a helical span at residues 145–163 (WSFVCFVVMALVLLVMLLR). The Cytoplasmic portion of the chain corresponds to 164–175 (APRPARGGFSAA).

It belongs to the DsbB family.

The protein localises to the cell inner membrane. Functionally, required for disulfide bond formation in some periplasmic proteins. Acts by oxidizing the DsbA protein. The protein is Disulfide bond formation protein B of Paracidovorax citrulli (strain AAC00-1) (Acidovorax citrulli).